The chain runs to 916 residues: Translation initiation factor IF-2 (916 aa).

Residues 151–191 (NLDEQQRLAESDRARDEAIQRKRDEEQAAKDRVEAERKAAE) show a composition bias toward basic and acidic residues. 2 disordered regions span residues 151 to 262 (NLDE…SHVM) and 280 to 328 (HLSA…ERPT). Composition is skewed to low complexity over residues 192-243 (EAAA…ATPA) and 293-305 (RGKPTGRPGSSSS). Residues 415 to 584 (SRPPVVTIMG…SLQAEVLELK (170 aa)) enclose the tr-type G domain. The interval 424–431 (GHVDHGKT) is G1. 424–431 (GHVDHGKT) provides a ligand contact to GTP. The segment at 449–453 (GITQH) is G2. Residues 470-473 (DTPG) are G3. GTP-binding positions include 470–474 (DTPGH) and 524–527 (NKID). Positions 524–527 (NKID) are G4. Residues 560–562 (SAK) form a G5 region.

This sequence belongs to the TRAFAC class translation factor GTPase superfamily. Classic translation factor GTPase family. IF-2 subfamily.

It localises to the cytoplasm. Functionally, one of the essential components for the initiation of protein synthesis. Protects formylmethionyl-tRNA from spontaneous hydrolysis and promotes its binding to the 30S ribosomal subunits. Also involved in the hydrolysis of GTP during the formation of the 70S ribosomal complex. This is Translation initiation factor IF-2 from Xanthomonas campestris pv. campestris (strain B100).